We begin with the raw amino-acid sequence, 213 residues long: Adenylyl-sulfate kinase (213 aa).

Positions 1 to 17 (MPAHQLDDHNQETRSDD) are enriched in basic and acidic residues. The tract at residues 1-20 (MPAHQLDDHNQETRSDDENI) is disordered. ATP is bound at residue 47 to 54 (GLSGSGKS). The active-site Phosphoserine intermediate is the Ser121.

Belongs to the APS kinase family.

It carries out the reaction adenosine 5'-phosphosulfate + ATP = 3'-phosphoadenylyl sulfate + ADP + H(+). Its pathway is sulfur metabolism; hydrogen sulfide biosynthesis; sulfite from sulfate: step 2/3. In terms of biological role, catalyzes the synthesis of activated sulfate. This is Adenylyl-sulfate kinase from Yersinia pestis.